Reading from the N-terminus, the 230-residue chain is Flagellar L-ring protein (230 aa).

An N-terminal signal peptide occupies residues 1–15; the sequence is MSRPPLLSSACLAAT. A lipid anchor (N-palmitoyl cysteine) is attached at C16. Residue C16 is the site of S-diacylglycerol cysteine attachment.

Belongs to the FlgH family. In terms of assembly, the basal body constitutes a major portion of the flagellar organelle and consists of four rings (L,P,S, and M) mounted on a central rod.

The protein resides in the cell outer membrane. Its subcellular location is the bacterial flagellum basal body. Its function is as follows. Assembles around the rod to form the L-ring and probably protects the motor/basal body from shearing forces during rotation. This is Flagellar L-ring protein from Xanthomonas oryzae pv. oryzae (strain MAFF 311018).